A 735-amino-acid chain; its full sequence is E3 ubiquitin-protein ligase SH3RF2 (735 aa).

The RING-type zinc-finger motif lies at 12 to 53 (CPVCFEKLDVTAKVLPCQHTFCKPCLQRIFKAHKELRCPECR). SH3 domains are found at residues 125–184 (DGVP…VIKQ) and 187–252 (QPPP…PNLS). 2 disordered regions span residues 260–301 (SKGH…GSGQ) and 335–373 (TSPSMLTQHGDRADFPASSAGQVSTSHPAPASPGHSTAM). A compositionally biased stretch (polar residues) spans 273 to 289 (LMSSPSRGKATNTSTLR). Residues 373–466 (MVSVPSSQQH…RHPTVCTTWA (94 aa)) are interaction with PAK4. In terms of domain architecture, SH3 3 spans 383–444 (LSTNMFVALH…PSDYVIPVFS (62 aa)). 3 disordered regions span residues 472–534 (VSSQ…PVQS), 612–637 (ETPIKSEPPPKPPASAPPSILVKPEN), and 649–735 (VRFQ…FPSK). Polar residues predominate over residues 523 to 534 (RKNGSLQRPVQS). Residues 617 to 627 (SEPPPKPPASA) show a composition bias toward pro residues. Residues 647 to 652 (KTVRFQ) are interaction with PPP1CA. The residue at position 655 (Ser655) is a Phosphoserine. Residues 715-735 (FSKTTPPVSTASVSQTLFPSK) are compositionally biased toward polar residues.

It belongs to the SH3RF family. In terms of assembly, interacts with FASLG and PPP1CA. Interacts with PAK4 and TNFRSF1A. Interacts with DLK1, MAP3K10, MAPK8IP1/JIP1, MAPK8IP2/JIP2 and MAPK8IP3/JIP3. Interacts with RAC1 (both active GTP- or inactive GDP-bound forms). Post-translationally, autoubiquitinated.

Its subcellular location is the nucleus. It catalyses the reaction S-ubiquitinyl-[E2 ubiquitin-conjugating enzyme]-L-cysteine + [acceptor protein]-L-lysine = [E2 ubiquitin-conjugating enzyme]-L-cysteine + N(6)-ubiquitinyl-[acceptor protein]-L-lysine.. It functions in the pathway protein modification; protein ubiquitination. Has E3 ubiquitin-protein ligase activity. Acts as an anti-apoptotic regulator of the JNK pathway by ubiquitinating and promoting the degradation of SH3RF1, a scaffold protein that is required for pro-apoptotic JNK activation. Facilitates TNF-alpha-mediated recruitment of adapter proteins TRADD and RIPK1 to TNFRSF1A and regulates PAK4 protein stability via inhibition of its ubiquitin-mediated proteasomal degradation. Inhibits PPP1CA phosphatase activity. In Rattus norvegicus (Rat), this protein is E3 ubiquitin-protein ligase SH3RF2 (Sh3rf2).